Consider the following 228-residue polypeptide: MLAKQFISKSLASSLRRLLPVSSTASSLKGSMMTIPKFTSIRTYTDSPEMPDFSEYQTKSTGDRSRVISYAMVGTMGALTAAGAQATVHDFLASWSASADVLAMSKAEVDLSKIPEGKNLVVKWQGKPVFIRHRTPEEIQEANSVDISTLRDPQADSDRVQKPEWLVMIGVCTHLGCVPIGEAGDYGGWFCPCHGSHYDISGRIRRGPAPLNLAIPAYTFEGSKIIIG.

Residues 1 to 26 (MLAKQFISKSLASSLRRLLPVSSTAS) constitute a mitochondrion transit peptide. Residues 27–63 (SLKGSMMTIPKFTSIRTYTDSPEMPDFSEYQTKSTGD) lie on the Mitochondrial matrix side of the membrane. A helical transmembrane segment spans residues 64-93 (RSRVISYAMVGTMGALTAAGAQATVHDFLA). The Mitochondrial intermembrane segment spans residues 94–228 (SWSASADVLA…TFEGSKIIIG (135 aa)). In terms of domain architecture, Rieske spans 139–227 (IQEANSVDIS…YTFEGSKIII (89 aa)). 4 residues coordinate [2Fe-2S] cluster: cysteine 172, histidine 174, cysteine 191, and histidine 194. An intrachain disulfide couples cysteine 177 to cysteine 193.

Belongs to the Rieske iron-sulfur protein family. In terms of assembly, component of the ubiquinol-cytochrome c oxidoreductase (cytochrome b-c1 complex, complex III, CIII), a multisubunit enzyme composed of 3 respiratory subunits cytochrome b, cytochrome c1 and Rieske protein, 2 core protein subunits, and additional low-molecular weight protein subunits. The complex exists as an obligatory dimer and forms supercomplexes (SCs) in the inner mitochondrial membrane with cytochrome c oxidase (complex IV, CIV). It depends on [2Fe-2S] cluster as a cofactor.

Its subcellular location is the mitochondrion inner membrane. The enzyme catalyses a quinol + 2 Fe(III)-[cytochrome c](out) = a quinone + 2 Fe(II)-[cytochrome c](out) + 2 H(+)(out). Functionally, component of the ubiquinol-cytochrome c oxidoreductase, a multisubunit transmembrane complex that is part of the mitochondrial electron transport chain which drives oxidative phosphorylation. The respiratory chain contains 3 multisubunit complexes succinate dehydrogenase (complex II, CII), ubiquinol-cytochrome c oxidoreductase (cytochrome b-c1 complex, complex III, CIII) and cytochrome c oxidase (complex IV, CIV), that cooperate to transfer electrons derived from NADH and succinate to molecular oxygen, creating an electrochemical gradient over the inner membrane that drives transmembrane transport and the ATP synthase. The cytochrome b-c1 complex catalyzes electron transfer from ubiquinol to cytochrome c, linking this redox reaction to translocation of protons across the mitochondrial inner membrane, with protons being carried across the membrane as hydrogens on the quinol. In the process called Q cycle, 2 protons are consumed from the matrix, 4 protons are released into the intermembrane space and 2 electrons are passed to cytochrome c. The Rieske protein is a catalytic core subunit containing a [2Fe-2S] iron-sulfur cluster. It cycles between 2 conformational states during catalysis to transfer electrons from the quinol bound in the Q(0) site in cytochrome b to cytochrome c1. The protein is Cytochrome b-c1 complex subunit Rieske, mitochondrial (rip1) of Schizosaccharomyces pombe (strain 972 / ATCC 24843) (Fission yeast).